The primary structure comprises 397 residues: Putative protein FAM47D (397 aa).

This sequence belongs to the FAM47 family.

The chain is Putative protein FAM47D (FAM47DP) from Homo sapiens (Human).